We begin with the raw amino-acid sequence, 244 residues long: NAD(P)H-quinone oxidoreductase subunit K (244 aa).

[4Fe-4S] cluster is bound by residues cysteine 51, cysteine 52, cysteine 116, and cysteine 147.

It belongs to the complex I 20 kDa subunit family. As to quaternary structure, NDH-1 can be composed of about 15 different subunits; different subcomplexes with different compositions have been identified which probably have different functions. The cofactor is [4Fe-4S] cluster.

It localises to the cellular thylakoid membrane. It carries out the reaction a plastoquinone + NADH + (n+1) H(+)(in) = a plastoquinol + NAD(+) + n H(+)(out). The catalysed reaction is a plastoquinone + NADPH + (n+1) H(+)(in) = a plastoquinol + NADP(+) + n H(+)(out). NDH-1 shuttles electrons from an unknown electron donor, via FMN and iron-sulfur (Fe-S) centers, to quinones in the respiratory and/or the photosynthetic chain. The immediate electron acceptor for the enzyme in this species is believed to be plastoquinone. Couples the redox reaction to proton translocation, and thus conserves the redox energy in a proton gradient. Cyanobacterial NDH-1 also plays a role in inorganic carbon-concentration. This is NAD(P)H-quinone oxidoreductase subunit K from Synechococcus sp. (strain JA-2-3B'a(2-13)) (Cyanobacteria bacterium Yellowstone B-Prime).